A 186-amino-acid polypeptide reads, in one-letter code: MTAGIDLNDIKRRMDGAINAFKSDLASLRTGRASANILDPVMVEAYGSRVALNTVANITVPEPRMLGVSIWDKSMVGAVDRAIRESNLGLNPIVDGQNLRIPLPELNEERRKSLVKVAHGYAENSKVAIRHVRRDGMDSLKKAEKDGEIGKDDARSLSEKLQKMTDDTISDIDRLLAEKEKEIMQV.

Belongs to the RRF family.

It localises to the cytoplasm. Its function is as follows. Responsible for the release of ribosomes from messenger RNA at the termination of protein biosynthesis. May increase the efficiency of translation by recycling ribosomes from one round of translation to another. The sequence is that of Ribosome-recycling factor from Allorhizobium ampelinum (strain ATCC BAA-846 / DSM 112012 / S4) (Agrobacterium vitis (strain S4)).